The sequence spans 114 residues: Hydrogenase maturation factor HypA (114 aa).

Ni(2+) is bound at residue His-2. Positions 73, 76, 89, and 92 each coordinate Zn(2+).

This sequence belongs to the HypA/HybF family.

Its function is as follows. Involved in the maturation of [NiFe] hydrogenases. Required for nickel insertion into the metal center of the hydrogenase. The polypeptide is Hydrogenase maturation factor HypA (Desulfitobacterium hafniense (strain DSM 10664 / DCB-2)).